An 871-amino-acid polypeptide reads, in one-letter code: Leucine--tRNA ligase (871 aa).

A 'HIGH' region motif is present at residues 43-53; the sequence is PYPSGRIHIGH. The short motif at 629–633 is the 'KMSKS' region element; sequence KMSKS. An ATP-binding site is contributed by Lys-632.

The protein belongs to the class-I aminoacyl-tRNA synthetase family.

It is found in the cytoplasm. It carries out the reaction tRNA(Leu) + L-leucine + ATP = L-leucyl-tRNA(Leu) + AMP + diphosphate. This Chelativorans sp. (strain BNC1) protein is Leucine--tRNA ligase.